A 503-amino-acid polypeptide reads, in one-letter code: Glucosaminyl-phosphatidylinositol-acyltransferase PIGW (503 aa).

Over 1 to 21 (MSQKQLKEAFVRNLSGTSVLE) the chain is Lumenal. An N-linked (GlcNAc...) asparagine glycan is attached at N13. The helical transmembrane segment at 22-42 (VTQGLCFPAFCILCRGLWIIF) threads the bilayer. Residues 43–48 (SQHVCS) are Cytoplasmic-facing. Residues 49–71 (FSNTWSTRFLMDFVVLIVPLVIT) form a helical membrane-spanning segment. At 72–74 (LTV) the chain is on the lumenal side. A helical transmembrane segment spans residues 75–97 (LSSFILLENLTVIVWGAWLLYQI). Residues 98–131 (YHRRTCYAKVPVQKVFANFLKISLESEYNPAITC) are Cytoplasmic-facing. A helical membrane pass occupies residues 132–152 (YRVINSVFTAIAILAVDFPLF). Residues 153–160 (PRRFAKTE) are Lumenal-facing. Residues 161–181 (LYGTGAMDFGVGGFIFGAAMV) form a helical membrane-spanning segment. At 182 to 201 (CPEVRRKSIEESRFNYLRKS) the chain is on the cytoplasmic side. Residues 202-222 (LYSVWPLVFLGMGRLVIIKSI) traverse the membrane as a helical segment. The Lumenal segment spans residues 223–236 (GYQEHSTEYGIHWN). A helical transmembrane segment spans residues 237 to 257 (FFFTIIVVRLVTSLLLIIFPL). Residues 258-259 (NK) lie on the Cytoplasmic side of the membrane. The chain crosses the membrane as a helical span at residues 260–280 (SWIVAVSITVVYQLALDYTPL). Topologically, residues 281 to 304 (KRILLYGTDGSGTRVGFLNANREG) are lumenal. The helical transmembrane segment at 305–325 (IISTLGYVTIHMAGVQTGLYV) threads the bilayer. Over 326-339 (LKGRAQVRDWIKAT) the chain is Cytoplasmic. The chain crosses the membrane as a helical span at residues 340–360 (CWVFSVAVGFFISLHIVQVNI). Over 361–380 (EAVSRRMANLAFCLWVVASS) the chain is Lumenal. The chain crosses the membrane as a helical span at residues 381-401 (LMLLSCLLLSGIILSFAQFLI). Residues 402–447 (KGSLVPCSWKLIQSPTTHKNHSESLILEAEKNQPSLCLITALNRNQ) are Cytoplasmic-facing. A Phosphoserine modification is found at S415. A helical transmembrane segment spans residues 448-468 (LFFFLLSNITTGLINLTMDTL). The Lumenal segment spans residues 469 to 472 (HTGA). Residues 473–493 (LWTLVVLSIYMFTNCLVIYVL) traverse the membrane as a helical segment. The Cytoplasmic segment spans residues 494–503 (DLQGKTIKFW).

This sequence belongs to the PIGW family.

The protein localises to the endoplasmic reticulum membrane. Its pathway is glycolipid biosynthesis; glycosylphosphatidylinositol-anchor biosynthesis. Acyltransferase that catalyzes the acyl transfer from an acyl-CoA at the 2-OH position of the inositol ring of glucosaminyl phosphatidylinositol (GlcN-PI) to generate GlcN-(acyl)PI and participates in the fourth step of GPI-anchor biosynthesi. Required for the transport of GPI-anchored proteins to the plasma membrane. Acetylation during GPI-anchor biosynthesis is not essential for the subsequent mannosylation and is usually removed soon after the attachment of GPIs to proteins. The protein is Glucosaminyl-phosphatidylinositol-acyltransferase PIGW of Mus musculus (Mouse).